Consider the following 451-residue polypeptide: Tol-Pal system protein TolB 1 (451 aa).

Residues 1–19 form the signal peptide; sequence MTLRMLFAFALLAAAPAQA. Positions 18–29 are enriched in low complexity; the sequence is QAQQTEPQPAEE. 2 disordered regions span residues 18–37 and 431–451; these read QAQQ…GTVS and NERR…PLLP.

This sequence belongs to the TolB family. The Tol-Pal system is composed of five core proteins: the inner membrane proteins TolA, TolQ and TolR, the periplasmic protein TolB and the outer membrane protein Pal. They form a network linking the inner and outer membranes and the peptidoglycan layer.

It localises to the periplasm. Part of the Tol-Pal system, which plays a role in outer membrane invagination during cell division and is important for maintaining outer membrane integrity. In Novosphingobium aromaticivorans (strain ATCC 700278 / DSM 12444 / CCUG 56034 / CIP 105152 / NBRC 16084 / F199), this protein is Tol-Pal system protein TolB 1.